The sequence spans 561 residues: Urocanate hydratase (561 aa).

Residues 52-53 (GG), glutamine 130, 176-178 (GMG), glutamate 196, arginine 201, 242-243 (NA), 263-267 (QTSAH), 273-274 (YL), and tyrosine 322 each bind NAD(+). The active site involves cysteine 410. Residue glycine 492 coordinates NAD(+).

Belongs to the urocanase family. NAD(+) is required as a cofactor.

It is found in the cytoplasm. The enzyme catalyses 4-imidazolone-5-propanoate = trans-urocanate + H2O. It participates in amino-acid degradation; L-histidine degradation into L-glutamate; N-formimidoyl-L-glutamate from L-histidine: step 2/3. In terms of biological role, catalyzes the conversion of urocanate to 4-imidazolone-5-propionate. The protein is Urocanate hydratase of Salmonella arizonae (strain ATCC BAA-731 / CDC346-86 / RSK2980).